We begin with the raw amino-acid sequence, 203 residues long: E3 ubiquitin-protein ligase RNF152 (203 aa).

The segment at Cys12–Arg55 adopts an RING-type zinc-finger fold. The interval Ile106–Thr165 is necessary for interaction with RRAGA. The chain crosses the membrane as a helical span at residues Ser167 to Leu187.

The protein belongs to the RNF152 family. In terms of assembly, interacts with RRAGA (inactive GDP-bound form); stimulated by amino acid starvation. Ubiquitinated. Autoubiquitinated in vitro, leading to its degradation by the proteasome.

It is found in the lysosome membrane. The catalysed reaction is S-ubiquitinyl-[E2 ubiquitin-conjugating enzyme]-L-cysteine + [acceptor protein]-L-lysine = [E2 ubiquitin-conjugating enzyme]-L-cysteine + N(6)-ubiquitinyl-[acceptor protein]-L-lysine.. It participates in protein modification; protein ubiquitination. In terms of biological role, E3 ubiquitin-protein ligase that acts as a negative regulator of mTORC1 signaling by mediating ubiquitination of RagA/RRAGA and RHEB. Catalyzes 'Lys-63'-linked polyubiquitination of RagA/RRAGA in response to amino acid starvation, thereby regulating mTORC1 signaling. Also mediates monoubiquitination of RHEB, promoting its association with the TSC-TBC complex and subsequent inhibition. Also mediates 'Lys-48'-linked polyubiquitination of target proteins and their subsequent targeting to the proteasome for degradation. Induces apoptosis when overexpressed. The sequence is that of E3 ubiquitin-protein ligase RNF152 from Ailuropoda melanoleuca (Giant panda).